A 165-amino-acid chain; its full sequence is Lipoprotein signal peptidase (165 aa).

4 helical membrane passes run Tyr11 to Ser31, Val41 to Leu61, Gln64 to Val84, and Phe92 to Ile112. Active-site residues include Asp122 and Asp140. The chain crosses the membrane as a helical span at residues Phe132–Leu152.

It belongs to the peptidase A8 family.

The protein resides in the cell inner membrane. The catalysed reaction is Release of signal peptides from bacterial membrane prolipoproteins. Hydrolyzes -Xaa-Yaa-Zaa-|-(S,diacylglyceryl)Cys-, in which Xaa is hydrophobic (preferably Leu), and Yaa (Ala or Ser) and Zaa (Gly or Ala) have small, neutral side chains.. It functions in the pathway protein modification; lipoprotein biosynthesis (signal peptide cleavage). Its function is as follows. This protein specifically catalyzes the removal of signal peptides from prolipoproteins. This chain is Lipoprotein signal peptidase, found in Neisseria meningitidis serogroup A / serotype 4A (strain DSM 15465 / Z2491).